Reading from the N-terminus, the 155-residue chain is MADIKNNPEYSSFFGVMGASSAMVFSAMGAAYGTAKSGTGIAAMSVMRPELIMKSIIPVVMAGIIAIYGLVVAVLIANSLTDGITLYRSFLQLGAGLSVGLSGLAAGFAIGIVGDAGVRGTAQQPRLFVGMILILIFAEVLGLYGLIVALILSTK.

The Lumenal segment spans residues Met1–Tyr10. Residues Ser11–Gly33 traverse the membrane as a helical segment. At Thr34–Ser55 the chain is on the cytoplasmic side. Residues Ile56 to Ile76 traverse the membrane as a helical segment. Over Ala77 to Gln92 the chain is Lumenal. A helical membrane pass occupies residues Leu93–Gly114. At Asp115–Met131 the chain is on the cytoplasmic side. A helical transmembrane segment spans residues Ile132–Leu152. Over Ser153 to Lys155 the chain is Lumenal.

This sequence belongs to the V-ATPase proteolipid subunit family. V-ATPase is a heteromultimeric enzyme made up of two complexes: the ATP-hydrolytic V1 complex and the proton translocation V0 complex. The V1 complex consists of three catalytic AB heterodimers that form a heterohexamer, three peripheral stalks each consisting of EG heterodimers, one central rotor including subunits D and F, and the regulatory subunits C and H. The proton translocation complex V0 consists of the proton transport subunit a, a ring of proteolipid subunits c9c'', rotary subunit d, subunits e and f, and the accessory subunits ATP6AP1/Ac45 and ATP6AP2/PRR. Interacts with the V0 complex V-ATPase subunit a4 ATP6V0A4. Interacts with LASS2. Interacts with RNF182; this interaction leads to ubiquitination and degradation via the proteasome pathway. Post-translationally, ubiquitinated by RNF182, leading to its degradation via the ubiquitin-proteasome pathway.

The protein resides in the cytoplasmic vesicle. The protein localises to the clathrin-coated vesicle membrane. Its subcellular location is the secretory vesicle. It is found in the synaptic vesicle membrane. Functionally, proton-conducting pore forming subunit of the V0 complex of vacuolar(H+)-ATPase (V-ATPase), a multisubunit enzyme composed of a peripheral complex (V1) that hydrolyzes ATP and a membrane integral complex (V0) that translocates protons. V-ATPase is responsible for acidifying and maintaining the pH of intracellular compartments and in some cell types, is targeted to the plasma membrane, where it is responsible for acidifying the extracellular environment. In Mus musculus (Mouse), this protein is V-type proton ATPase 16 kDa proteolipid subunit c (Atp6v0c).